The sequence spans 67 residues: UPF0337 protein Atu4724 (67 aa).

It belongs to the UPF0337 (CsbD) family.

This is UPF0337 protein Atu4724 from Agrobacterium fabrum (strain C58 / ATCC 33970) (Agrobacterium tumefaciens (strain C58)).